A 91-amino-acid chain; its full sequence is Long neurotoxin LNTX28 (91 aa).

Residues 1–21 form the signal peptide; the sequence is MKTLLLTLVVMTIVCLDLGYT. Disulfide bonds link cysteine 24-cysteine 41, cysteine 34-cysteine 62, cysteine 47-cysteine 51, cysteine 66-cysteine 77, and cysteine 78-cysteine 83.

Belongs to the three-finger toxin family. Long-chain subfamily. Type II alpha-neurotoxin sub-subfamily. As to expression, expressed by the venom gland.

The protein resides in the secreted. Functionally, binds with high affinity to muscular (alpha-1/CHRNA1) and neuronal (alpha-7/CHRNA7) nicotinic acetylcholine receptor (nAChR) and inhibits acetylcholine from binding to the receptor, thereby impairing neuromuscular and neuronal transmission. The chain is Long neurotoxin LNTX28 from Ophiophagus hannah (King cobra).